Here is a 131-residue protein sequence, read N- to C-terminus: MTSRFMLIFAAISGFIFVALGAFGAHVLSKTMGAVEMGWIQTGLEYQAFHTLAILGLAVAMQRRISIWFYWSSVFLALGTVLFSGSLYCLALSHLRLWAFVTPVGGVSFLAGWALMLVGAIRLKRKGVSHE.

Over 1-4 (MTSR) the chain is Periplasmic. The helical transmembrane segment at 5-25 (FMLIFAAISGFIFVALGAFGA) threads the bilayer. Residues 26-64 (HVLSKTMGAVEMGWIQTGLEYQAFHTLAILGLAVAMQRR) are Cytoplasmic-facing. Residues 65-85 (ISIWFYWSSVFLALGTVLFSG) traverse the membrane as a helical segment. Over 86–97 (SLYCLALSHLRL) the chain is Periplasmic. The chain crosses the membrane as a helical span at residues 98-118 (WAFVTPVGGVSFLAGWALMLV). Residues 119–131 (GAIRLKRKGVSHE) lie on the Cytoplasmic side of the membrane.

It belongs to the UPF0382 family.

The protein resides in the cell inner membrane. This is UPF0382 inner membrane protein YgdD (ygdD) from Escherichia coli O157:H7.